The primary structure comprises 592 residues: MTGYDSSEEAERDSSPADGYRQTPAQLSAQIRVLNDEIAQLRRRLAITPTDTRPLERQLTESANRINALSERNEKLVVTLRDARAQLLQLKEEVDRLAQPPSGYGVFLSAGPEGTAEVFTGGRRMRLAVSPTVEVEQLKRGQQLRLNEALTVVEAAQFDVIGEVCSLREVLDGDRALVVGHADEERVVHLAAPLMDIALKPGDSLLIDSKAGYAYERVPKSEVEDLVLEEVPDVAYEDIGGLTRQIEQIRDAVELPFLHADLYREYKLRPPKGVLLYGPPGCGKTLIAKAVANSLAKKVAALRGEETHTSYFLNIKGPELLNKYVGETERTIRLIFQRAREKASDGTPVIVFFDEMDSVFRTRGTGVSSDVETTIVPQLLSEIDGVEGLENVIVIGASNREDMIDPAILRPGRLDVKIKIERPDAEAARDIFTKYLVTELPIHPEDLAEFGGDRQACLSGMIQHTVERMYTETDENRFLEVTYANGDKEVLYFKDFNSGAMIQNIVDRAKKSAIKSRIETGVNGLRVSQLLEAITDEFAENEDLPNTTNPDDWARISGKKGERIVYIRTLVSGKQSEGSRAIDTASNTGQYL.

Residues Met-1–Glu-11 show a composition bias toward acidic residues. Positions Met-1–Pro-24 are disordered. Residues Ala-25–Gln-99 are a coiled coil. Gly-281–Leu-286 serves as a coordination point for ATP. Residues Tyr-591–Leu-592 form a docks into pockets in the proteasome alpha-ring region.

It belongs to the AAA ATPase family. In terms of assembly, homohexamer. Assembles into a hexameric ring structure that caps the 20S proteasome core. Strongly interacts with the prokaryotic ubiquitin-like protein Pup through a hydrophobic interface; the interacting region of ARC lies in its N-terminal coiled-coil domain. There is one Pup binding site per ARC hexamer ring. Upon ATP-binding, the C-terminus of ARC interacts with the alpha-rings of the proteasome core, possibly by binding to the intersubunit pockets.

The protein operates within protein degradation; proteasomal Pup-dependent pathway. ATPase which is responsible for recognizing, binding, unfolding and translocation of pupylated proteins into the bacterial 20S proteasome core particle. May be essential for opening the gate of the 20S proteasome via an interaction with its C-terminus, thereby allowing substrate entry and access to the site of proteolysis. Thus, the C-termini of the proteasomal ATPase may function like a 'key in a lock' to induce gate opening and therefore regulate proteolysis. This chain is Proteasome-associated ATPase, found in Nakamurella multipartita (strain ATCC 700099 / DSM 44233 / CIP 104796 / JCM 9543 / NBRC 105858 / Y-104) (Microsphaera multipartita).